A 388-amino-acid chain; its full sequence is Chorismate synthase (388 aa).

Residues Arg-39 and Arg-45 each contribute to the NADP(+) site. Residues 130 to 132 (RSS), 251 to 252 (NA), Gly-296, 311 to 315 (KPIPT), and Arg-337 contribute to the FMN site.

Belongs to the chorismate synthase family. Homotetramer. It depends on FMNH2 as a cofactor.

The catalysed reaction is 5-O-(1-carboxyvinyl)-3-phosphoshikimate = chorismate + phosphate. It functions in the pathway metabolic intermediate biosynthesis; chorismate biosynthesis; chorismate from D-erythrose 4-phosphate and phosphoenolpyruvate: step 7/7. Catalyzes the anti-1,4-elimination of the C-3 phosphate and the C-6 proR hydrogen from 5-enolpyruvylshikimate-3-phosphate (EPSP) to yield chorismate, which is the branch point compound that serves as the starting substrate for the three terminal pathways of aromatic amino acid biosynthesis. This reaction introduces a second double bond into the aromatic ring system. The chain is Chorismate synthase from Streptococcus pyogenes serotype M5 (strain Manfredo).